The chain runs to 163 residues: CDP-archaeol synthase (163 aa).

The next 5 helical transmembrane spans lie at 4 to 24 (LLLGLIYYIPALVANGSAPFI), 52 to 72 (LLLSLTFGTTVGAIISRFLGI), 75 to 95 (IIIGFVESLGAMLGDMLGAFI), 107 to 127 (APILDQLDFILGATVVLISFN), and 128 to 148 (VNLNIYQVVFVCVLVIALHMF).

Belongs to the CDP-archaeol synthase family. Mg(2+) is required as a cofactor.

It is found in the cell membrane. The catalysed reaction is 2,3-bis-O-(geranylgeranyl)-sn-glycerol 1-phosphate + CTP + H(+) = CDP-2,3-bis-O-(geranylgeranyl)-sn-glycerol + diphosphate. The protein operates within membrane lipid metabolism; glycerophospholipid metabolism. In terms of biological role, catalyzes the formation of CDP-2,3-bis-(O-geranylgeranyl)-sn-glycerol (CDP-archaeol) from 2,3-bis-(O-geranylgeranyl)-sn-glycerol 1-phosphate (DGGGP) and CTP. This reaction is the third ether-bond-formation step in the biosynthesis of archaeal membrane lipids. This Sulfolobus acidocaldarius (strain ATCC 33909 / DSM 639 / JCM 8929 / NBRC 15157 / NCIMB 11770) protein is CDP-archaeol synthase.